A 276-amino-acid polypeptide reads, in one-letter code: Nickel import system permease protein NikC (276 aa).

5 consecutive transmembrane segments (helical) span residues 10-30 (LIFFVFGAFIFVMIVLQFFVS), 73-93 (LFVTVLTLIAIVVIGVTLGLF), 108-128 (FIDVGLSIPEFIIVIALASFF), 186-206 (IIPAIIVLMVVDFGKIILYIS), and 238-258 (IMLIAPASVIAITILIFNLTG). In terms of domain architecture, ABC transmembrane type-1 spans 69 to 258 (ARSTLFVTVL…ITILIFNLTG (190 aa)).

Belongs to the binding-protein-dependent transport system permease family. OppBC subfamily. As to quaternary structure, the complex is composed of two ATP-binding proteins (NikD and NikE), two transmembrane proteins (NikB and NikC) and a solute-binding protein (NikA).

The protein resides in the cell membrane. Functionally, part of the ABC transporter complex NikABCDE (Opp2) involved in nickel import. Probably responsible for the translocation of the substrate across the membrane. In Staphylococcus aureus (strain bovine RF122 / ET3-1), this protein is Nickel import system permease protein NikC.